The primary structure comprises 197 residues: Putative ankyrin repeat protein R875 (197 aa).

ANK repeat units follow at residues 78–106 (LNKC…DIRE), 107–136 (NDDC…DIRA), 138–166 (DDDA…NFRK), and 168–196 (NDYE…VLHE).

This Acanthamoeba polyphaga mimivirus (APMV) protein is Putative ankyrin repeat protein R875.